The primary structure comprises 347 residues: Isopentenyl-diphosphate delta-isomerase (347 aa).

A substrate-binding site is contributed by 9–10 (RK). Residues Ser67, 68-70 (SMT), Ser98, and Asn127 contribute to the FMN site. 98 to 100 (SQR) is a substrate binding site. Position 162 (Gln162) interacts with substrate. Glu163 contacts Mg(2+). Residues Lys194, Thr224, 274–276 (GIR), and 295–296 (AA) contribute to the FMN site.

The protein belongs to the IPP isomerase type 2 family. In terms of assembly, homooctamer. Dimer of tetramers. FMN is required as a cofactor. It depends on NADPH as a cofactor. Mg(2+) serves as cofactor.

It is found in the cytoplasm. It carries out the reaction isopentenyl diphosphate = dimethylallyl diphosphate. Involved in the biosynthesis of isoprenoids. Catalyzes the 1,3-allylic rearrangement of the homoallylic substrate isopentenyl (IPP) to its allylic isomer, dimethylallyl diphosphate (DMAPP). The chain is Isopentenyl-diphosphate delta-isomerase from Cronobacter sakazakii (strain ATCC BAA-894) (Enterobacter sakazakii).